The following is a 70-amino-acid chain: NADH dehydrogenase [ubiquinone] 1 alpha subcomplex subunit 1 (70 aa).

A helical membrane pass occupies residues 1–21; sequence MWFEILPGLSVMGVCLLIPGL.

It belongs to the complex I NDUFA1 subunit family. Complex I is composed of 45 different subunits. In terms of tissue distribution, primarily expressed in heart and skeletal muscle.

It is found in the mitochondrion inner membrane. Functionally, accessory subunit of the mitochondrial membrane respiratory chain NADH dehydrogenase (Complex I), that is believed not to be involved in catalysis. Complex I functions in the transfer of electrons from NADH to the respiratory chain. The immediate electron acceptor for the enzyme is believed to be ubiquinone. In Homo sapiens (Human), this protein is NADH dehydrogenase [ubiquinone] 1 alpha subcomplex subunit 1 (NDUFA1).